The sequence spans 211 residues: Shikimate kinase (211 aa).

The interval 1–23 (MNASANLCAASDNDPQPGDQEAA) is disordered. 50–55 (GAGKTT) is an ATP binding site. Thr-54 provides a ligand contact to Mg(2+). Residues Asp-72, Arg-96, and Gly-118 each coordinate substrate. Arg-156 lines the ATP pocket. Substrate is bound at residue Arg-175.

The protein belongs to the shikimate kinase family. Monomer. It depends on Mg(2+) as a cofactor.

The protein resides in the cytoplasm. The enzyme catalyses shikimate + ATP = 3-phosphoshikimate + ADP + H(+). Its pathway is metabolic intermediate biosynthesis; chorismate biosynthesis; chorismate from D-erythrose 4-phosphate and phosphoenolpyruvate: step 5/7. Catalyzes the specific phosphorylation of the 3-hydroxyl group of shikimic acid using ATP as a cosubstrate. The protein is Shikimate kinase of Bordetella bronchiseptica (strain ATCC BAA-588 / NCTC 13252 / RB50) (Alcaligenes bronchisepticus).